We begin with the raw amino-acid sequence, 539 residues long: Acrosin-binding protein (539 aa).

Residues 1–25 (MRQLAAGSLLSLLKVLLLPLAPAPA) form the signal peptide. Residues 26–106 (QDANSASTPG…ASWFESFCQF (81 aa)) form a pro-ACR binding region. A propeptide spans 26-269 (QDANSASTPG…NPFSFTPRVR (244 aa)) (removed in active form). The tract at residues 186–259 (LGGQEQGQEH…PKFQSEFVSS (74 aa)) is disordered. The span at 192-211 (GQEHKQEHKQEQGQEHKQDE) shows a compositional bias: basic and acidic residues. Residues 212-238 (GQEQEEQEEEQEEEGKQEEGQGTEESL) are compositionally biased toward acidic residues. The pro-ACR binding stretch occupies residues 315 to 423 (LPHVDALLVL…TQIGTLKSGR (109 aa)).

In terms of assembly, binds specifically to the 55- and 53-kDa proacrosins and the 49-kDa acrosin intermediate, but is not capable of binding 43-kDa acrosin intermediate and 32-kDa mature acrosin. Post-translationally, the N-terminus is blocked. In terms of processing, synthesized as a 60-kDa precursor, the 35-kDa mature form is post-translationally produced by the removal of the N-terminal half of the precursor during sperm maturation in the testis and/or epididymis. Phosphorylated on Tyr residues in capacitated sperm. In terms of tissue distribution, specifically expressed in testis.

It is found in the secreted. The protein localises to the cytoplasmic vesicle. It localises to the secretory vesicle. Its subcellular location is the acrosome. In terms of biological role, acrosomal protein that maintains proacrosin (pro-ACR) as an enzymatically inactive zymogen in the acrosome. Involved also in the acrosome formation. The sequence is that of Acrosin-binding protein from Sus scrofa (Pig).